The sequence spans 298 residues: Lipoyl synthase (298 aa).

The [4Fe-4S] cluster site is built by cysteine 40, cysteine 45, cysteine 51, cysteine 67, cysteine 71, cysteine 74, and serine 280. The Radical SAM core domain occupies 53–269 (AVRRTATFMI…KEIAMQKGFS (217 aa)).

Belongs to the radical SAM superfamily. Lipoyl synthase family. Requires [4Fe-4S] cluster as cofactor.

Its subcellular location is the cytoplasm. The enzyme catalyses [[Fe-S] cluster scaffold protein carrying a second [4Fe-4S](2+) cluster] + N(6)-octanoyl-L-lysyl-[protein] + 2 oxidized [2Fe-2S]-[ferredoxin] + 2 S-adenosyl-L-methionine + 4 H(+) = [[Fe-S] cluster scaffold protein] + N(6)-[(R)-dihydrolipoyl]-L-lysyl-[protein] + 4 Fe(3+) + 2 hydrogen sulfide + 2 5'-deoxyadenosine + 2 L-methionine + 2 reduced [2Fe-2S]-[ferredoxin]. The protein operates within protein modification; protein lipoylation via endogenous pathway; protein N(6)-(lipoyl)lysine from octanoyl-[acyl-carrier-protein]. Catalyzes the radical-mediated insertion of two sulfur atoms into the C-6 and C-8 positions of the octanoyl moiety bound to the lipoyl domains of lipoate-dependent enzymes, thereby converting the octanoylated domains into lipoylated derivatives. The protein is Lipoyl synthase of Bacillus subtilis (strain 168).